A 198-amino-acid chain; its full sequence is Elongation factor Ts (198 aa).

The involved in Mg(2+) ion dislocation from EF-Tu stretch occupies residues 81–84 (TDFV).

The protein belongs to the EF-Ts family.

The protein localises to the cytoplasm. Associates with the EF-Tu.GDP complex and induces the exchange of GDP to GTP. It remains bound to the aminoacyl-tRNA.EF-Tu.GTP complex up to the GTP hydrolysis stage on the ribosome. In Dictyoglomus turgidum (strain DSM 6724 / Z-1310), this protein is Elongation factor Ts.